The sequence spans 101 residues: Small ribosomal subunit protein bS18c (101 aa).

This sequence belongs to the bacterial ribosomal protein bS18 family. In terms of assembly, part of the 30S ribosomal subunit.

It localises to the plastid. Its subcellular location is the chloroplast. This Lepidium virginicum (Virginia pepperweed) protein is Small ribosomal subunit protein bS18c.